Here is an 855-residue protein sequence, read N- to C-terminus: Cell surface glycoprotein (855 aa).

The N-terminal stretch at 1-22 (MTANKQVRAVLLAALMVFSVFA) is a signal peptide. 19 N-linked (GlcNAc...) asparagine glycosylation sites follow: Asn78, Asn83, Asn108, Asn167, Asn174, Asn187, Asn203, Asn227, Asn230, Asn313, Asn363, Asn441, Asn548, Asn588, Asn608, Asn620, Asn642, Asn656, and Asn754. Residues 782–802 (ETTTAAETTTTEESTETTTTE) show a composition bias toward low complexity. Residues 782–831 (ETTTAAETTTTEESTETTTTEESTEEPTETATATEEPTEEATEETTESST) are disordered. Positions 817-827 (EPTEEATEETT) are enriched in acidic residues. The chain crosses the membrane as a helical span at residues 831-851 (TPGFGVVVALVALVAAALLAV). The short motif at 832-834 (PGF) is the PGF sorting signal element.

The protein belongs to the halobacterial S-layer protein family. Glycosylated. In terms of processing, cleaved by the archaeosortase ArtA at the C-terminus, with removal of a short hydrophobic segment. Post-translationally, lipidation.

Its subcellular location is the secreted. It is found in the cell wall. The protein resides in the S-layer. The protein localises to the cell membrane. In terms of biological role, S-layer protein. The S-layer is a paracrystalline mono-layered assembly of proteins which coats the surface of the cell. This is Cell surface glycoprotein from Haloferax gibbonsii.